Consider the following 884-residue polypeptide: Protein P (884 aa).

The tract at residues methionine 1–glutamine 184 is terminal protein domain (TP). The segment at leucine 185 to leucine 387 is spacer. Disordered stretches follow at residues proline 218–threonine 241 and arginine 299–serine 345. 2 stretches are compositionally biased toward polar residues: residues valine 222–threonine 241 and tyrosine 323–tyrosine 332. The polymerase/reverse transcriptase domain (RT) stretch occupies residues aspartate 388 to glutamine 729. One can recognise a Reverse transcriptase domain in the interval aspartate 398–isoleucine 639. Residues aspartate 470, aspartate 590, and aspartate 591 each contribute to the Mg(2+) site.

Belongs to the hepadnaviridae P protein family.

The catalysed reaction is DNA(n) + a 2'-deoxyribonucleoside 5'-triphosphate = DNA(n+1) + diphosphate. It carries out the reaction Endonucleolytic cleavage to 5'-phosphomonoester.. Activated by host HSP70 and HSP40 in vitro to be able to bind the epsilon loop of the pgRNA. Because deletion of the RNase H region renders the protein partly chaperone-independent, the chaperones may be needed indirectly to relieve occlusion of the RNA-binding site by this domain. Inhibited by several reverse-transcriptase inhibitors: Lamivudine, Adefovir and Entecavir. Its function is as follows. Multifunctional enzyme that converts the viral RNA genome into dsDNA in viral cytoplasmic capsids. This enzyme displays a DNA polymerase activity that can copy either DNA or RNA templates, and a ribonuclease H (RNase H) activity that cleaves the RNA strand of RNA-DNA heteroduplexes in a partially processive 3'- to 5'-endonucleasic mode. Neo-synthesized pregenomic RNA (pgRNA) are encapsidated together with the P protein, and reverse-transcribed inside the nucleocapsid. Initiation of reverse-transcription occurs first by binding the epsilon loop on the pgRNA genome, and is initiated by protein priming, thereby the 5'-end of (-)DNA is covalently linked to P protein. Partial (+)DNA is synthesized from the (-)DNA template and generates the relaxed circular DNA (RC-DNA) genome. After budding and infection, the RC-DNA migrates in the nucleus, and is converted into a plasmid-like covalently closed circular DNA (cccDNA). The activity of P protein does not seem to be necessary for cccDNA generation, and is presumably released from (+)DNA by host nuclear DNA repair machinery. The polypeptide is Protein P (Marmota monax (Woodchuck)).